A 458-amino-acid polypeptide reads, in one-letter code: MKSNFSKFKDFIKYKKVAVVGIGVSNRPLIKFLVKLGAKVTAFDKKHREKLGSISLELEEIGVDLVLGENYLDKLDGYDVIFKTPSMRIDRPEFVKAKESGAYITSEMEEFIKYCPAKVFGITGSDGKTTTTTLVYEMLKKEGYRTWVGGNIGTPLFANIEEMKEDHMVVLELSSFQLMTMDVSPEISLITNLSPNHLDVHKDFEEYVWAKKNIFKYQSSNNLLVLNKDDDLTNGMENEALGDVLKFSLVEKVYNGAYLSNNKLTMQGKEVCDSKDIKLKGRHNIANLLAAFCMVNKYVSIDSMKYVATNFSGVEHRCEFIREVNGVKYYNDSIASSPSRTLAGLNSFERPVILIAGGYDKKIPFKPLAEGGYDKIKILILMGDTKNKIKSAFEKVISHKKCEIEIVIVNSMEEAVKVADNMAEKGDIITLSPACASFDMYPNFEIRGNEFKNIVNSL.

ATP is bound at residue 124-130 (GSDGKTT).

This sequence belongs to the MurCDEF family.

Its subcellular location is the cytoplasm. The catalysed reaction is UDP-N-acetyl-alpha-D-muramoyl-L-alanine + D-glutamate + ATP = UDP-N-acetyl-alpha-D-muramoyl-L-alanyl-D-glutamate + ADP + phosphate + H(+). It participates in cell wall biogenesis; peptidoglycan biosynthesis. Cell wall formation. Catalyzes the addition of glutamate to the nucleotide precursor UDP-N-acetylmuramoyl-L-alanine (UMA). This Clostridium botulinum (strain 657 / Type Ba4) protein is UDP-N-acetylmuramoylalanine--D-glutamate ligase.